Consider the following 138-residue polypeptide: Ribosome maturation factor RimP (138 aa).

This sequence belongs to the RimP family.

The protein localises to the cytoplasm. In terms of biological role, required for maturation of 30S ribosomal subunits. This chain is Ribosome maturation factor RimP, found in Campylobacter curvus (strain 525.92).